The following is a 344-amino-acid chain: Lipase chaperone (344 aa).

Residues 13–35 (RIAPYGAAGLAAIVGVAIWSGTG) form a helical membrane-spanning segment.

It belongs to the lipase chaperone family.

The protein localises to the cell inner membrane. Its function is as follows. May be involved in the folding of the extracellular lipase during its passage through the periplasm. This is Lipase chaperone from Burkholderia vietnamiensis (strain G4 / LMG 22486) (Burkholderia cepacia (strain R1808)).